Reading from the N-terminus, the 528-residue chain is MPLTMSQAFIGNFLGNSPKWYKIAILSFLIINPILFFYVSPFVAGWVLVLEFIFTLAMALKCYPLQPGGLLAIEAVAIGMTSANQVLHEIEANLEVLLLLVFMVAGIYFMKQLLLFAFTKIITKVRSKILVSLMFCLTSAFLSAFLDALTVIAVIIAVAVGFYAIYHKVASGKDFSAVHDHTSESNNQLNNSELESFRGFLRNLLMHAGVGTALGGVCTMVGEPQNLIIAAQANWQFGEFVIRMSPVTVPVLIAGILTCLLVEKFRIFGYGAKLPDAVHKILCDYAAHEDAHRTNKDKMKLVIQVLVGVWLIAGLALHLASVGLVGLSVIILTTAFNGITDEHALGKAFEEALPFTALLAVFFAVVAVIIDQHLFAPVIQWALSYEGNTQLVIFYIANGLLSMVSDNVFVGTVYINEVKAALIDGQITRDQFDLLAVAINTGTNLPSVATPNGQAAFLFLLTSALAPLIRLSYGRMVWMALPYTIVLSVVGVLAIETGFLEQATQYFYDSHMIIHHSAKDVIAPLTSH.

The next 11 helical transmembrane spans lie at 10–30 (IGNF…SFLI), 63–83 (YPLQ…MTSA), 96–116 (VLLL…LLLF), 131–165 (VSLM…FYAI), 204–224 (LLMH…VGEP), 240–260 (FVIR…LTCL), 305–325 (VLVG…VGLV), 359–379 (LAVF…APVI), 391–411 (LVIF…VFVG), 449–469 (ATPN…APLI), and 476–496 (MVWM…LAIE).

This sequence belongs to the NhaB Na(+)/H(+) (TC 2.A.34) antiporter family.

It is found in the cell inner membrane. It carries out the reaction 2 Na(+)(in) + 3 H(+)(out) = 2 Na(+)(out) + 3 H(+)(in). Its function is as follows. Na(+)/H(+) antiporter that extrudes sodium in exchange for external protons. In Shewanella putrefaciens (strain CN-32 / ATCC BAA-453), this protein is Na(+)/H(+) antiporter NhaB.